A 293-amino-acid polypeptide reads, in one-letter code: MTGLYELVWRVLHALLCLHRTLTSWLRVRFGTWNWIWRRCCRAASAAVLAPLGFTLRKPPAVGRNRRHHRHPRGGSCLAAAHHRMRWRADGRSLEKLPVHMGLVITEVEQEPSFSDIASLVVWCMAVGISYISVYDHQGIFKRNNSRLMDEILKQQQELLGLDCSKYSPEFANSNDKDDQVLNCHLAVKVLSPEDGKADIVRAAQDFCQLVAQKQKRPTDLDVDTLASLLSSNGCPDPDLVLKFGPVDSTLGFLPWHIRLTEIVSLPSHLNISYEDFFSALRQYAACEQRLGK.

3 helical membrane-spanning segments follow: residues 1 to 23, 35 to 56, and 117 to 135; these read MTGL…RTLT, WIWR…GFTL, and IASL…ISVY. N-linked (GlcNAc...) asparagine glycans are attached at residues N144 and N271. Positions 290–292 match the RXG motif; crucial for prenyltransferase activity motif; sequence RLG. L291 and G292 together coordinate isopentenyl diphosphate.

Belongs to the UPP synthase family. The active dehydrodolichyl diphosphate synthase complex is a heterotetramer composed of a dimer of heterodimer of DHDDS and NUS1. Interacts with NPC2. It depends on Mg(2+) as a cofactor.

It localises to the endoplasmic reticulum membrane. The enzyme catalyses n isopentenyl diphosphate + (2E,6E)-farnesyl diphosphate = a di-trans,poly-cis-polyprenyl diphosphate + n diphosphate. Its pathway is protein modification; protein glycosylation. The protein operates within lipid metabolism. Activated by phospholipids including cardiolipin, phosphatidylcholine, phosphatidylethanolamine, phosphatidylinositol and phosphatidylserine. In terms of biological role, with DHDDS, forms the dehydrodolichyl diphosphate synthase (DDS) complex, an essential component of the dolichol monophosphate (Dol-P) biosynthetic machinery. Both subunits contribute to enzymatic activity, i.e. condensation of multiple copies of isopentenyl pyrophosphate (IPP) to farnesyl pyrophosphate (FPP) to produce dehydrodolichyl diphosphate (Dedol-PP), a precursor of dolichol phosphate which is utilized as a sugar carrier in protein glycosylation in the endoplasmic reticulum (ER). Synthesizes long-chain polyprenols, mostly of C95 and C100 chain length. Regulates the glycosylation and stability of nascent NPC2, thereby promoting trafficking of LDL-derived cholesterol. Acts as a specific receptor for the N-terminus of Nogo-B, a neural and cardiovascular regulator. The protein is Dehydrodolichyl diphosphate synthase complex subunit NUS1 of Homo sapiens (Human).